The primary structure comprises 153 residues: Endoribonuclease YbeY (153 aa).

Zn(2+)-binding residues include H113, H117, and H123.

It belongs to the endoribonuclease YbeY family. Zn(2+) serves as cofactor.

The protein resides in the cytoplasm. Functionally, single strand-specific metallo-endoribonuclease involved in late-stage 70S ribosome quality control and in maturation of the 3' terminus of the 16S rRNA. The sequence is that of Endoribonuclease YbeY from Aliivibrio fischeri (strain MJ11) (Vibrio fischeri).